Consider the following 345-residue polypeptide: MLLFGFLLLTFALVSQRQGAEAESNLSSKFQFSSAKEQNGVQEPQHEKIITVSANGSIHSPKFPYTYPRNTVLVWRLVAIEENVLIQLTFDERFGLEDPEDDICKYDFVEVEEPSDGSILGRWCGSTAVPGKQISKGNQIRIRFVSDEYFPSEPGFCIHYTLLTPHQTESASPTVLPPSAFSLDLLNNAVAGFSTVEELIRYLEPDRWQLDLEDLYKPAWQLLGKAYIHGRKSRVVDLNLLKEEVRMYSCTPRNFSVSLREELKRTDTIFWPLCLLVKRCGGNCACCQHSCSECQCIPTKVTKKYHEVLQLKPRSGVRGLHKSLTDVPLEHHEECECVCKGNAEG.

The first 22 residues, 1-22 (MLLFGFLLLTFALVSQRQGAEA), serve as a signal peptide directing secretion. Asn-25 and Asn-55 each carry an N-linked (GlcNAc...) asparagine glycan. The CUB domain occupies 46 to 163 (HEKIITVSAN…PGFCIHYTLL (118 aa)). 4 disulfide bridges follow: Cys-104-Cys-124, Cys-250-Cys-294, Cys-280-Cys-335, and Cys-287-Cys-337.

It belongs to the PDGF/VEGF growth factor family. In terms of assembly, homodimer; disulfide-linked. Interacts with PDGFRA homodimers, and with heterodimers formed by PDGFRA and PDGFRB. Proteolytic removal of the N-terminal CUB domain releasing the core domain is necessary for unmasking the receptor-binding epitopes of the core domain. Cleavage after basic residues in the hinge region (region connecting the CUB and growth factor domains) gives rise to the receptor-binding form.

The protein localises to the secreted. Functionally, growth factor that plays an essential role in the regulation of embryonic development, cell proliferation, cell migration, survival and chemotaxis. Potent mitogen and chemoattractant for cells of mesenchymal origin. Required for normal skeleton formation during embryonic development. Required for normal skin morphogenesis during embryonic development. Plays an important role in wound healing, in angiogenesis and blood vessel development. This Gekko japonicus (Schlegel's Japanese gecko) protein is Platelet-derived growth factor C (PDGFC).